The sequence spans 177 residues: Cell division protein ZapC (177 aa).

The protein belongs to the ZapC family. As to quaternary structure, interacts directly with FtsZ.

It is found in the cytoplasm. Its function is as follows. Contributes to the efficiency of the cell division process by stabilizing the polymeric form of the cell division protein FtsZ. Acts by promoting interactions between FtsZ protofilaments and suppressing the GTPase activity of FtsZ. The polypeptide is Cell division protein ZapC (Shewanella frigidimarina (strain NCIMB 400)).